The sequence spans 388 residues: S-adenosylmethionine synthase (388 aa).

Histidine 16 lines the ATP pocket. Aspartate 18 contributes to the Mg(2+) binding site. Glutamate 44 is a binding site for K(+). L-methionine is bound by residues glutamate 57 and glutamine 100. Residues 100–110 (QSPEIAQGVDR) form a flexible loop region. ATP contacts are provided by residues 165–167 (DAK), aspartate 240, 246–247 (RK), alanine 263, and lysine 267. Aspartate 240 lines the L-methionine pocket. L-methionine is bound at residue lysine 271.

Belongs to the AdoMet synthase family. In terms of assembly, homotetramer; dimer of dimers. It depends on Mg(2+) as a cofactor. K(+) is required as a cofactor.

It is found in the cytoplasm. It carries out the reaction L-methionine + ATP + H2O = S-adenosyl-L-methionine + phosphate + diphosphate. It functions in the pathway amino-acid biosynthesis; S-adenosyl-L-methionine biosynthesis; S-adenosyl-L-methionine from L-methionine: step 1/1. Catalyzes the formation of S-adenosylmethionine (AdoMet) from methionine and ATP. The overall synthetic reaction is composed of two sequential steps, AdoMet formation and the subsequent tripolyphosphate hydrolysis which occurs prior to release of AdoMet from the enzyme. The sequence is that of S-adenosylmethionine synthase from Acinetobacter baumannii (strain AYE).